Consider the following 353-residue polypeptide: UDP-N-acetylglucosamine--N-acetylmuramyl-(pentapeptide) pyrophosphoryl-undecaprenol N-acetylglucosamine transferase (353 aa).

UDP-N-acetyl-alpha-D-glucosamine-binding positions include 11 to 13 (SAG), Arg164, Ser194, and Gln289.

Belongs to the glycosyltransferase 28 family. MurG subfamily.

Its subcellular location is the cell membrane. The enzyme catalyses di-trans,octa-cis-undecaprenyl diphospho-N-acetyl-alpha-D-muramoyl-L-alanyl-D-glutamyl-meso-2,6-diaminopimeloyl-D-alanyl-D-alanine + UDP-N-acetyl-alpha-D-glucosamine = di-trans,octa-cis-undecaprenyl diphospho-[N-acetyl-alpha-D-glucosaminyl-(1-&gt;4)]-N-acetyl-alpha-D-muramoyl-L-alanyl-D-glutamyl-meso-2,6-diaminopimeloyl-D-alanyl-D-alanine + UDP + H(+). It functions in the pathway cell wall biogenesis; peptidoglycan biosynthesis. Cell wall formation. Catalyzes the transfer of a GlcNAc subunit on undecaprenyl-pyrophosphoryl-MurNAc-pentapeptide (lipid intermediate I) to form undecaprenyl-pyrophosphoryl-MurNAc-(pentapeptide)GlcNAc (lipid intermediate II). The sequence is that of UDP-N-acetylglucosamine--N-acetylmuramyl-(pentapeptide) pyrophosphoryl-undecaprenol N-acetylglucosamine transferase from Clostridium kluyveri (strain ATCC 8527 / DSM 555 / NBRC 12016 / NCIMB 10680 / K1).